The primary structure comprises 234 residues: 7-cyano-7-deazaguanine synthase (234 aa).

13-23 (LSGGQDSTTCL) is an ATP binding site. Zn(2+) is bound by residues C193, C201, C204, and C207.

The protein belongs to the QueC family. It depends on Zn(2+) as a cofactor.

The enzyme catalyses 7-carboxy-7-deazaguanine + NH4(+) + ATP = 7-cyano-7-deazaguanine + ADP + phosphate + H2O + H(+). The protein operates within purine metabolism; 7-cyano-7-deazaguanine biosynthesis. Its function is as follows. Catalyzes the ATP-dependent conversion of 7-carboxy-7-deazaguanine (CDG) to 7-cyano-7-deazaguanine (preQ(0)). In Chromobacterium violaceum (strain ATCC 12472 / DSM 30191 / JCM 1249 / CCUG 213 / NBRC 12614 / NCIMB 9131 / NCTC 9757 / MK), this protein is 7-cyano-7-deazaguanine synthase.